Reading from the N-terminus, the 331-residue chain is tRNA-modifying protein YgfZ (331 aa).

2 residues coordinate folate: Trp28 and Trp191.

Belongs to the tRNA-modifying YgfZ family.

Its subcellular location is the cytoplasm. Folate-binding protein involved in regulating the level of ATP-DnaA and in the modification of some tRNAs. It is probably a key factor in regulatory networks that act via tRNA modification, such as initiation of chromosomal replication. The sequence is that of tRNA-modifying protein YgfZ from Edwardsiella ictaluri (strain 93-146).